A 322-amino-acid polypeptide reads, in one-letter code: tRNA dimethylallyltransferase (322 aa).

Gly-12–Thr-19 contributes to the ATP binding site. Residue Thr-14–Thr-19 coordinates substrate. 2 interaction with substrate tRNA regions span residues Asp-37 to Leu-40 and Gln-160 to Arg-164.

The protein belongs to the IPP transferase family. Monomer. Requires Mg(2+) as cofactor.

It catalyses the reaction adenosine(37) in tRNA + dimethylallyl diphosphate = N(6)-dimethylallyladenosine(37) in tRNA + diphosphate. In terms of biological role, catalyzes the transfer of a dimethylallyl group onto the adenine at position 37 in tRNAs that read codons beginning with uridine, leading to the formation of N6-(dimethylallyl)adenosine (i(6)A). This chain is tRNA dimethylallyltransferase, found in Pseudomonas putida (Arthrobacter siderocapsulatus).